The chain runs to 179 residues: Gut granule loss protein 3 (179 aa).

The segment at 40–59 is disordered; sequence DLDSASSGVGSSTCTEEQES. The segment covering 42 to 54 has biased composition (polar residues); it reads DSASSGVGSSTCT.

This Caenorhabditis elegans protein is Gut granule loss protein 3 (glo-3).